Reading from the N-terminus, the 402-residue chain is Multidrug resistance protein MdtH (402 aa).

Residues 1-12 (MSRVSQARNLGK) lie on the Cytoplasmic side of the membrane. A helical transmembrane segment spans residues 13–33 (YFLLIDNMLVVLGFFVVFPLI). The Periplasmic portion of the chain corresponds to 34–98 (SIRFVDQMGW…GFATMGIAHE (65 aa)). A helical transmembrane segment spans residues 99-116 (PWLLWFSCLLSGLGGTLF). Residues 117–138 (DPPRSALVVKLIRPQQRGRFFS) are Cytoplasmic-facing. A helical transmembrane segment spans residues 139 to 159 (LLMMQDSAGAVIGALLGSWLL). Residues 160 to 164 (QYDFR) are Periplasmic-facing. A helical transmembrane segment spans residues 165–185 (LVCATGAVLFVLCAAFNAWLL). Residues 186–213 (PAWKLSTVRTPVREGMTRVMRDKRFVTY) are Cytoplasmic-facing. Residues 214–234 (VLTLAGYYMLAVQVMLMLPIM) form a helical membrane-spanning segment. Residues 235–243 (VNDVAGAPS) lie on the Periplasmic side of the membrane. Residues 244 to 264 (AVKWMYAIEACLSLTLLYPIA) traverse the membrane as a helical segment. The Cytoplasmic portion of the chain corresponds to 265 to 276 (RWSEKHFRLEHR). Residues 277-297 (LMAGLLIMSLSMMPVGMVSGL) traverse the membrane as a helical segment. Residues 298-299 (QQ) are Periplasmic-facing. Residues 300–320 (LFTLICLFYIGSIIAEPARET) traverse the membrane as a helical segment. The Cytoplasmic portion of the chain corresponds to 321–339 (LSASLADARARGSYMGFSR). Residues 340–360 (LGLAIGGAIGYIGGGWLFDLG) traverse the membrane as a helical segment. Topologically, residues 361–367 (KSAHQPE) are periplasmic. A helical membrane pass occupies residues 368–388 (LPWMMLGIIGIFTFLALGWQF). Residues 389–402 (SQKRTARRLLERDA) lie on the Cytoplasmic side of the membrane.

This sequence belongs to the major facilitator superfamily. DHA1 family. MdtH (TC 2.A.1.2.21) subfamily.

The protein localises to the cell inner membrane. Functionally, confers resistance to norfloxacin and enoxacin. This chain is Multidrug resistance protein MdtH, found in Escherichia coli O7:K1 (strain IAI39 / ExPEC).